The sequence spans 182 residues: 3-hydroxyanthranilate 3,4-dioxygenase (182 aa).

Arginine 46 is a binding site for O2. Fe cation contacts are provided by histidine 50, glutamate 56, and histidine 96. Glutamate 56 contributes to the substrate binding site. Substrate-binding residues include arginine 100 and glutamate 111. Positions 126, 129, 163, and 166 each coordinate Fe cation.

It belongs to the 3-HAO family. Homodimer. Requires Fe(2+) as cofactor.

The catalysed reaction is 3-hydroxyanthranilate + O2 = (2Z,4Z)-2-amino-3-carboxymuconate 6-semialdehyde. The protein operates within cofactor biosynthesis; NAD(+) biosynthesis; quinolinate from L-kynurenine: step 3/3. Catalyzes the oxidative ring opening of 3-hydroxyanthranilate to 2-amino-3-carboxymuconate semialdehyde, which spontaneously cyclizes to quinolinate. This Brucella anthropi (strain ATCC 49188 / DSM 6882 / CCUG 24695 / JCM 21032 / LMG 3331 / NBRC 15819 / NCTC 12168 / Alc 37) (Ochrobactrum anthropi) protein is 3-hydroxyanthranilate 3,4-dioxygenase.